The following is a 56-amino-acid chain: Large ribosomal subunit protein bL32 (56 aa).

Residues 1–16 show a composition bias toward basic residues; sequence MAVQKNRKTRSKRGMR. The interval 1–37 is disordered; that stretch reads MAVQKNRKTRSKRGMRRSHDALGTATMSVDSTSGETH. Residues 25 to 35 show a composition bias toward polar residues; it reads ATMSVDSTSGE.

Belongs to the bacterial ribosomal protein bL32 family.

This is Large ribosomal subunit protein bL32 from Pseudoalteromonas atlantica (strain T6c / ATCC BAA-1087).